Reading from the N-terminus, the 277-residue chain is 3-methyl-2-oxobutanoate hydroxymethyltransferase (277 aa).

Positions 42 and 81 each coordinate Mg(2+). 3-methyl-2-oxobutanoate is bound by residues 42 to 43 (DS), D81, and K110. E112 is a binding site for Mg(2+). The active-site Proton acceptor is the E179.

This sequence belongs to the PanB family. In terms of assembly, homodecamer; pentamer of dimers. It depends on Mg(2+) as a cofactor.

It is found in the cytoplasm. The enzyme catalyses 3-methyl-2-oxobutanoate + (6R)-5,10-methylene-5,6,7,8-tetrahydrofolate + H2O = 2-dehydropantoate + (6S)-5,6,7,8-tetrahydrofolate. The protein operates within cofactor biosynthesis; (R)-pantothenate biosynthesis; (R)-pantoate from 3-methyl-2-oxobutanoate: step 1/2. Its function is as follows. Catalyzes the reversible reaction in which hydroxymethyl group from 5,10-methylenetetrahydrofolate is transferred onto alpha-ketoisovalerate to form ketopantoate. This Anaplasma marginale (strain Florida) protein is 3-methyl-2-oxobutanoate hydroxymethyltransferase.